A 189-amino-acid chain; its full sequence is Segregation and condensation protein B (189 aa).

It belongs to the ScpB family. As to quaternary structure, homodimer. Homodimerization may be required to stabilize the binding of ScpA to the Smc head domains. Component of a cohesin-like complex composed of ScpA, ScpB and the Smc homodimer, in which ScpA and ScpB bind to the head domain of Smc. The presence of the three proteins is required for the association of the complex with DNA.

It is found in the cytoplasm. In terms of biological role, participates in chromosomal partition during cell division. May act via the formation of a condensin-like complex containing Smc and ScpA that pull DNA away from mid-cell into both cell halves. This Streptococcus pneumoniae serotype 19F (strain G54) protein is Segregation and condensation protein B.